A 466-amino-acid polypeptide reads, in one-letter code: UDP-N-acetylmuramoylalanine--D-glutamate ligase (466 aa).

An ATP-binding site is contributed by 121 to 127 (GTNGKST).

The protein belongs to the MurCDEF family.

The protein resides in the cytoplasm. The enzyme catalyses UDP-N-acetyl-alpha-D-muramoyl-L-alanine + D-glutamate + ATP = UDP-N-acetyl-alpha-D-muramoyl-L-alanyl-D-glutamate + ADP + phosphate + H(+). It participates in cell wall biogenesis; peptidoglycan biosynthesis. In terms of biological role, cell wall formation. Catalyzes the addition of glutamate to the nucleotide precursor UDP-N-acetylmuramoyl-L-alanine (UMA). In Nitrobacter winogradskyi (strain ATCC 25391 / DSM 10237 / CIP 104748 / NCIMB 11846 / Nb-255), this protein is UDP-N-acetylmuramoylalanine--D-glutamate ligase.